An 871-amino-acid polypeptide reads, in one-letter code: MVGFARTKFCKNLSSLSDNGENHEKPYTFEGNRQTVNDICNVLETGPWGPSAENTLSALSFKPQPEFVIGVLRRLKDVNRAIEYFRWYERRTELPHCPESYNSLLLVMARCRNFDALDQILGEMSVAGFGPSVNTCIEMVLGCVKANKLREGYDVVQMMRKFKFRPAFSAYTTLIGAFSAVNHSDMMLTLFQQMQELGYEPTVHLFTTLIRGFAKEGRVDSALSLLDEMKSSSLDADIVLYNVCIDSFGKVGKVDMAWKFFHEIEANGLKPDEVTYTSMIGVLCKANRLDEAVEMFEHLEKNRRVPCTYAYNTMIMGYGSAGKFDEAYSLLERQRAKGSIPSVIAYNCILTCLRKMGKVDEALKVFEEMKKDAAPNLSTYNILIDMLCRAGKLDTAFELRDSMQKAGLFPNVRTVNIMVDRLCKSQKLDEACAMFEEMDYKVCTPDEITFCSLIDGLGKVGRVDDAYKVYEKMLDSDCRTNSIVYTSLIKNFFNHGRKEDGHKIYKDMINQNCSPDLQLLNTYMDCMFKAGEPEKGRAMFEEIKARRFVPDARSYSILIHGLIKAGFANETYELFYSMKEQGCVLDTRAYNIVIDGFCKCGKVNKAYQLLEEMKTKGFEPTVVTYGSVIDGLAKIDRLDEAYMLFEEAKSKRIELNVVIYSSLIDGFGKVGRIDEAYLILEELMQKGLTPNLYTWNSLLDALVKAEEINEALVCFQSMKELKCTPNQVTYGILINGLCKVRKFNKAFVFWQEMQKQGMKPSTISYTTMISGLAKAGNIAEAGALFDRFKANGGVPDSACYNAMIEGLSNGNRAMDAFSLFEETRRRGLPIHNKTCVVLLDTLHKNDCLEQAAIVGAVLRETGKARHAARSW.

PPR repeat units follow at residues 97–131, 132–166, 167–201, 202–236, 237–271, 272–306, 307–341, 342–372, 376–410, 411–445, 446–480, 481–515, 516–550, 551–585, 586–620, 621–655, 656–690, 691–725, 726–760, 761–795, and 796–830; these read CPESYNSLLLVMARCRNFDALDQILGEMSVAGFGP, SVNTCIEMVLGCVKANKLREGYDVVQMMRKFKFRP, AFSAYTTLIGAFSAVNHSDMMLTLFQQMQELGYEP, TVHLFTTLIRGFAKEGRVDSALSLLDEMKSSSLDA, DIVLYNVCIDSFGKVGKVDMAWKFFHEIEANGLKP, DEVTYTSMIGVLCKANRLDEAVEMFEHLEKNRRVP, CTYAYNTMIMGYGSAGKFDEAYSLLERQRAKGSIP, SVIAYNCILTCLRKMGKVDEALKVFEEMKKD, NLSTYNILIDMLCRAGKLDTAFELRDSMQKAGLFP, NVRTVNIMVDRLCKSQKLDEACAMFEEMDYKVCTP, DEITFCSLIDGLGKVGRVDDAYKVYEKMLDSDCRT, NSIVYTSLIKNFFNHGRKEDGHKIYKDMINQNCSP, DLQLLNTYMDCMFKAGEPEKGRAMFEEIKARRFVP, DARSYSILIHGLIKAGFANETYELFYSMKEQGCVL, DTRAYNIVIDGFCKCGKVNKAYQLLEEMKTKGFEP, TVVTYGSVIDGLAKIDRLDEAYMLFEEAKSKRIEL, NVVIYSSLIDGFGKVGRIDEAYLILEELMQKGLTP, NLYTWNSLLDALVKAEEINEALVCFQSMKELKCTP, NQVTYGILINGLCKVRKFNKAFVFWQEMQKQGMKP, STISYTTMISGLAKAGNIAEAGALFDRFKANGGVP, and DSACYNAMIEGLSNGNRAMDAFSLFEETRRRGLPI.

Belongs to the PPR family. P subfamily.

The polypeptide is Pentatricopeptide repeat-containing protein At3g06920 (Arabidopsis thaliana (Mouse-ear cress)).